Reading from the N-terminus, the 171-residue chain is Co-chaperone protein HscB (171 aa).

The J domain maps to D2 to L74.

The protein belongs to the HscB family. As to quaternary structure, interacts with HscA and stimulates its ATPase activity. Interacts with IscU.

Its function is as follows. Co-chaperone involved in the maturation of iron-sulfur cluster-containing proteins. Seems to help targeting proteins to be folded toward HscA. The chain is Co-chaperone protein HscB from Escherichia coli (strain SMS-3-5 / SECEC).